Reading from the N-terminus, the 100-residue chain is NADH-quinone oxidoreductase subunit K (100 aa).

3 consecutive transmembrane segments (helical) span residues 4 to 24 (YEYY…GIII), 29 to 49 (IAML…FVAF), and 60 to 80 (VFVF…LGLI).

This sequence belongs to the complex I subunit 4L family. NDH-1 is composed of 14 different subunits. Subunits NuoA, H, J, K, L, M, N constitute the membrane sector of the complex.

Its subcellular location is the cell inner membrane. It catalyses the reaction a quinone + NADH + 5 H(+)(in) = a quinol + NAD(+) + 4 H(+)(out). Functionally, NDH-1 shuttles electrons from NADH, via FMN and iron-sulfur (Fe-S) centers, to quinones in the respiratory chain. The immediate electron acceptor for the enzyme in this species is believed to be ubiquinone. Couples the redox reaction to proton translocation (for every two electrons transferred, four hydrogen ions are translocated across the cytoplasmic membrane), and thus conserves the redox energy in a proton gradient. This is NADH-quinone oxidoreductase subunit K from Persephonella marina (strain DSM 14350 / EX-H1).